The chain runs to 432 residues: Casein kinase II subunit alpha-4, chloroplastic (432 aa).

A chloroplast-targeting transit peptide spans 1-55 (MALRPCTGFTISSLRNASAANNNLFSLLSFSSSSPAKRNLLLSSLQDNLRRFASS). A disordered region spans residues 63–83 (LRNQQQQHQQQQQSRVKEKSE). Positions 66-75 (QQQQHQQQQQ) are enriched in low complexity. Residues 132-417 (YEVVRKVGRG…AKEAMAHPYF (286 aa)) enclose the Protein kinase domain. ATP is bound by residues 138–146 (VGRGKYSEV) and Lys161. Asp249 functions as the Proton acceptor in the catalytic mechanism.

Belongs to the protein kinase superfamily. Ser/Thr protein kinase family. CK2 subfamily. Tetramer of two alpha and two beta chains. As to expression, expressed in root tips, lateral root primordia, cotyledons, leaf primordia, sepals, filaments, stigma, and anthers.

The protein resides in the plastid. It is found in the chloroplast. It catalyses the reaction L-seryl-[protein] + ATP = O-phospho-L-seryl-[protein] + ADP + H(+). The enzyme catalyses L-threonyl-[protein] + ATP = O-phospho-L-threonyl-[protein] + ADP + H(+). In terms of biological role, casein kinases are operationally defined by their preferential utilization of acidic proteins such as caseins as substrates. The alpha chain contains the catalytic site. Involved in the regulation of various developmental processes. Involved in the regulation of plant growth and flowering time. Involved in retrograde signaling in plant responses to abscisic acid (ABA) and heat stress. May act as an enhancing factor in abiotic stress signaling through modulation of the expression of some molecular players in retrograde signaling. Phosphorylates RuBisCo activase (RCA) at Thr-78. In Arabidopsis thaliana (Mouse-ear cress), this protein is Casein kinase II subunit alpha-4, chloroplastic.